A 473-amino-acid polypeptide reads, in one-letter code: Photosystem II CP43 reaction center protein (473 aa).

The propeptide occupies 1–14 (MKTLYSLRRFYPVE). An N-acetylthreonine modification is found at Thr-15. Position 15 is a phosphothreonine (Thr-15). 5 consecutive transmembrane segments (helical) span residues 69 to 93 (LFEV…PHLA), 134 to 155 (LLGP…KDRN), 178 to 200 (KALY…RKIT), 255 to 275 (KPFA…LSYS), and 291 to 312 (WFNN…ASQA). Glu-367 provides a ligand contact to [CaMn4O5] cluster. Residues 447 to 471 (RARAAAAGFEKGIDRDFEPVLSMTP) form a helical membrane-spanning segment.

Belongs to the PsbB/PsbC family. PsbC subfamily. In terms of assembly, PSII is composed of 1 copy each of membrane proteins PsbA, PsbB, PsbC, PsbD, PsbE, PsbF, PsbH, PsbI, PsbJ, PsbK, PsbL, PsbM, PsbT, PsbX, PsbY, PsbZ, Psb30/Ycf12, at least 3 peripheral proteins of the oxygen-evolving complex and a large number of cofactors. It forms dimeric complexes. The cofactor is Binds multiple chlorophylls and provides some of the ligands for the Ca-4Mn-5O cluster of the oxygen-evolving complex. It may also provide a ligand for a Cl- that is required for oxygen evolution. PSII binds additional chlorophylls, carotenoids and specific lipids..

The protein resides in the plastid. Its subcellular location is the chloroplast thylakoid membrane. In terms of biological role, one of the components of the core complex of photosystem II (PSII). It binds chlorophyll and helps catalyze the primary light-induced photochemical processes of PSII. PSII is a light-driven water:plastoquinone oxidoreductase, using light energy to abstract electrons from H(2)O, generating O(2) and a proton gradient subsequently used for ATP formation. The sequence is that of Photosystem II CP43 reaction center protein from Liriodendron tulipifera (Tuliptree).